A 79-amino-acid polypeptide reads, in one-letter code: Hematopoietic cell signal transducer (79 aa).

An N-terminal signal peptide occupies residues 1-18; sequence MVPPGNILFLLLLPVATA. At 19–35 the chain is on the extracellular side; sequence QMTPGSCSGCGPLSLPL. A helical membrane pass occupies residues 36–56; that stretch reads LAGLVAADAVVSLLIVVVVFV. Residues 57–79 are Cytoplasmic-facing; it reads CARLRSRPTQEDDKIYINMPGRG. Position 72 is a phosphotyrosine (Y72). The interval 72–74 is GRB2 binding site; sequence YIN. The segment at 72–75 is PIK3R1 binding site; that stretch reads YINM.

It belongs to the DAP10 family. As to quaternary structure, homodimer; Disulfide-linked. Heterohexamer composed of four subunits of HCST/DAP10 and two subunits of KLRK1. Interacts (via transmembrane domain) with KLRK1 (via transmembrane domain); the interaction is required for KLRK1 NK cell surface and induces NK cell-mediated cytotoxicity. Interacts with PIK3R1 and GRB2. Interacts with CLEC5A. Forms an CLEC5A/TYROBP/HCST trimolecular complex depending almost solely on TYROBP. Interacts with KLRK1. Interacts with CD300H. Post-translationally, phosphorylated; PIK3R1 and GRB2 associate specifically with tyrosine-phosphorylated HCST. In terms of processing, O-glycosylated.

The protein localises to the membrane. Functionally, transmembrane adapter protein which associates with KLRK1 to form an activation receptor KLRK1-HCST in lymphoid and myeloid cells; this receptor plays a major role in triggering cytotoxicity against target cells expressing cell surface ligands such as MHC class I chain-related MICA and MICB, and UL16-binding proteins (ULBPs); these ligands are up-regulated by stress conditions and pathological state such as viral infection and tumor transformation. Functions as a docking site for PI3-kinase PIK3R1 and GRB2. Interaction of ULBPs with KLRK1-HCST triggers calcium mobilization and activation of the PIK3R1, MAP2K/ERK, and JAK2/STAT5 signaling pathways. Both PIK3R1 and GRB2 are required for full KLRK1-HCST-mediated activation and ultimate killing of target cells. In NK cells, KLRK1-HCST signaling directly induces cytotoxicity and enhances cytokine production initiated via DAP12/TYROBP-associated receptors. In T-cells, it provides primarily costimulation for TCR-induced signals. KLRK1-HCST receptor plays a role in immune surveillance against tumors and is required for cytolysis of tumors cells; indeed, melanoma cells that do not express KLRK1 ligands escape from immune surveillance mediated by NK cells. The protein is Hematopoietic cell signal transducer (HCST) of Bos taurus (Bovine).